The primary structure comprises 459 residues: Trichothecene 3-O-acetyltransferase TRI101 (459 aa).

Asp-218 and Ile-221 together coordinate Ca(2+). CoA contacts are provided by residues Lys-253, 266-269 (FVST), Asp-302, Gln-318, and Arg-343. Ca(2+) is bound at residue Asp-376. CoA contacts are provided by Ser-386 and Lys-390. Glu-449 is a Ca(2+) binding site.

Belongs to the trichothecene 3-O-acetyltransferase family.

It functions in the pathway sesquiterpene biosynthesis; trichothecene biosynthesis. 3-O-acetyltransferase involved in the biosynthesis of trichothecenes, a very large family of chemically related bicyclic sesquiterpene compounds acting as mycotoxins, including T2-toxin. The biosynthesis of trichothecenes begins with the cyclization of farnesyl diphosphate to trichodiene and is catalyzed by the trichodiene synthase TRI5. Trichodiene undergoes a series of oxygenations catalyzed by the cytochrome P450 monooxygenase TRI4. TRI4 controls the addition of four oxygens at C-2, C-3, C-11, and the C-12, C-13-epoxide to form the intermediate isotrichotriol. Isotrichotriol then undergoes a non-enzymatic isomerization and cyclization to form isotrichodermol. During this process, the oxygen at the C-2 position becomes the pyran ring oxygen and the hydroxyl group at C-11 is lost. More complex type A trichothecenes are built by modifying isotrichodermol through a series of paired hydroxylation and acetylation or acylation steps. Isotrichodermol is converted to isotrichodermin by the acetyltransferase TRI101. TRI101 encodes a C-3 transacetylase that acts as a self-protection or resistance factor during biosynthesis and that the presence of a free C-3 hydroxyl group is a key component of Fusarium trichothecene phytotoxicity. A second hydroxyl group is added to C-15 by the trichothecene C-15 hydroxylase TRI11, producing 15-decalonectrin, which is then acetylated by TRI3, producing calonectrin. A third hydroxyl group is added at C-4 by the cytochrome P450 monooxygenase TRI13, converting calonectrin to 3,15-diacetoxyspirpenol, which is subsequently acetylated bythe acetyltransferase TRI7. A fourth hydroxyl group is added to C-8 by the cytochrome P450 monooxygenase TRI1, followed by the addition of an isovaleryl moiety by TRI16. Finally, the acetyl group is removed from the C-3 position by the trichothecene C-3 esterase TRI8 to produce T-2 toxin. This chain is Trichothecene 3-O-acetyltransferase TRI101, found in Fusarium sporotrichioides.